The sequence spans 491 residues: Probable malate:quinone oxidoreductase (491 aa).

This sequence belongs to the MQO family. FAD is required as a cofactor.

It carries out the reaction (S)-malate + a quinone = a quinol + oxaloacetate. It functions in the pathway carbohydrate metabolism; tricarboxylic acid cycle; oxaloacetate from (S)-malate (quinone route): step 1/1. The polypeptide is Probable malate:quinone oxidoreductase (Actinobacillus pleuropneumoniae serotype 5b (strain L20)).